A 47-amino-acid chain; its full sequence is Photosystem II reaction center protein K (47 aa).

A propeptide spanning residues 1–10 (MAAFSLDLLA) is cleaved from the precursor. The helical transmembrane segment at 19–39 (FGPLIDILPIIPVFFLLLAFV) threads the bilayer.

Belongs to the PsbK family. PSII is composed of 1 copy each of membrane proteins PsbA, PsbB, PsbC, PsbD, PsbE, PsbF, PsbH, PsbI, PsbJ, PsbK, PsbL, PsbM, PsbT, PsbX, PsbY, PsbZ, Psb30/Ycf12, peripheral proteins PsbO, CyanoQ (PsbQ), PsbU, PsbV and a large number of cofactors. It forms dimeric complexes.

It is found in the cellular thylakoid membrane. Its function is as follows. One of the components of the core complex of photosystem II (PSII). PSII is a light-driven water:plastoquinone oxidoreductase that uses light energy to abstract electrons from H(2)O, generating O(2) and a proton gradient subsequently used for ATP formation. It consists of a core antenna complex that captures photons, and an electron transfer chain that converts photonic excitation into a charge separation. This Synechococcus sp. (strain WH7803) protein is Photosystem II reaction center protein K.